The chain runs to 281 residues: Non-selective voltage-gated ion channel 2 (281 aa).

Residues Arg11 and Arg19 each coordinate ATP.

The protein belongs to the eukaryotic mitochondrial porin family.

It is found in the mitochondrion outer membrane. Non-selective voltage-gated ion channel that mediates the transport of anions and cations through the mitochondrion outer membrane. The channel adopts an open conformation at low or zero membrane potential and a closed conformation at potentials above 30-40 mV. The open state has a weak anion selectivity whereas the closed state is cation-selective. Does not confer permeability to NADH. Functionally, catalyzes the scrambling of phospholipids across the outer mitochondrial membrane; the mechanism is unrelated to channel activity and is capable of translocating both anionic and zwitterionic phospholipids. The sequence is that of Non-selective voltage-gated ion channel 2 (POR2) from Saccharomyces cerevisiae (strain ATCC 204508 / S288c) (Baker's yeast).